The chain runs to 168 residues: MKVLLIQDVEHLGTAGDIKEVSGGYGRNYLLPKKLAVFATPGLIKQAEERLAKQRKLEAKQREELRGLADSINGVTLKFVTKVGEQDRLYGSVTSSDIAEKLQAAIGQEVDRRKIQLDEPIKRTGVYSIGVRLLAGLEPHINVVVEGENGEGSVQPAAEAAEVASTEA.

The segment at 148–168 is disordered; the sequence is ENGEGSVQPAAEAAEVASTEA. The span at 157–168 shows a compositional bias: low complexity; that stretch reads AAEAAEVASTEA.

It belongs to the bacterial ribosomal protein bL9 family.

Functionally, binds to the 23S rRNA. In Herpetosiphon aurantiacus (strain ATCC 23779 / DSM 785 / 114-95), this protein is Large ribosomal subunit protein bL9.